We begin with the raw amino-acid sequence, 119 residues long: Large ribosomal subunit protein uL22 (119 aa).

The protein belongs to the universal ribosomal protein uL22 family. In terms of assembly, part of the 50S ribosomal subunit.

Functionally, this protein binds specifically to 23S rRNA; its binding is stimulated by other ribosomal proteins, e.g. L4, L17, and L20. It is important during the early stages of 50S assembly. It makes multiple contacts with different domains of the 23S rRNA in the assembled 50S subunit and ribosome. In terms of biological role, the globular domain of the protein is located near the polypeptide exit tunnel on the outside of the subunit, while an extended beta-hairpin is found that lines the wall of the exit tunnel in the center of the 70S ribosome. The chain is Large ribosomal subunit protein uL22 from Chlorobium phaeovibrioides (strain DSM 265 / 1930) (Prosthecochloris vibrioformis (strain DSM 265)).